Reading from the N-terminus, the 796-residue chain is Probable phosphoketolase (796 aa).

It belongs to the XFP family. The cofactor is thiamine diphosphate.

The polypeptide is Probable phosphoketolase (Synechococcus elongatus (strain ATCC 33912 / PCC 7942 / FACHB-805) (Anacystis nidulans R2)).